Reading from the N-terminus, the 205-residue chain is Macrophage immunometabolism regulator (205 aa).

The tract at residues 1-40 (MEVDINGVNRTNNSVPSTAEGSSPSKPDPEKPRCSSTPCS) is disordered. Residues 8 to 25 (VNRTNNSVPSTAEGSSPS) are compositionally biased toward polar residues.

It belongs to the UNC119-binding protein family. Interacts with unc119 family proteins; interaction preferentially takes place when unc119 proteins are unliganded with myristoylated proteins.

The protein resides in the cytoplasm. The protein localises to the cell projection. It is found in the cilium. May play a role in immune regulation through regulation of the macrophage function. May also play a role in trafficking of proteins via its interaction with unc119 family cargo adapters. May play a role in ciliary membrane localization. The polypeptide is Macrophage immunometabolism regulator (macir) (Xenopus laevis (African clawed frog)).